Consider the following 445-residue polypeptide: Tubulin alpha-1 chain (445 aa).

Glutamine 11 lines the GTP pocket. The residue at position 40 (lysine 40) is an N6-acetyllysine. GTP-binding residues include glutamate 71, serine 140, glycine 144, threonine 145, threonine 179, asparagine 206, and asparagine 228. Residue glutamate 71 participates in Mg(2+) binding. The active site involves glutamate 254.

Belongs to the tubulin family. In terms of assembly, dimer of alpha and beta chains. A typical microtubule is a hollow water-filled tube with an outer diameter of 25 nm and an inner diameter of 15 nM. Alpha-beta heterodimers associate head-to-tail to form protofilaments running lengthwise along the microtubule wall with the beta-tubulin subunit facing the microtubule plus end conferring a structural polarity. Microtubules usually have 13 protofilaments but different protofilament numbers can be found in some organisms and specialized cells. Mg(2+) is required as a cofactor. In terms of processing, acetylation of alpha chains at Lys-40 stabilizes microtubules and affects affinity and processivity of microtubule motors. This modification has a role in multiple cellular functions, ranging from cell motility, cell cycle progression or cell differentiation to intracellular trafficking and signaling.

It is found in the cytoplasm. Its subcellular location is the cytoskeleton. It catalyses the reaction GTP + H2O = GDP + phosphate + H(+). Functionally, tubulin is the major constituent of microtubules, a cylinder consisting of laterally associated linear protofilaments composed of alpha- and beta-tubulin heterodimers. Microtubules grow by the addition of GTP-tubulin dimers to the microtubule end, where a stabilizing cap forms. Below the cap, tubulin dimers are in GDP-bound state, owing to GTPase activity of alpha-tubulin. The polypeptide is Tubulin alpha-1 chain (Stylonychia lemnae (Ciliate)).